The sequence spans 176 residues: ATP-dependent protease subunit HslV (176 aa).

The active site involves threonine 2. Positions 157, 160, and 163 each coordinate Na(+).

Belongs to the peptidase T1B family. HslV subfamily. A double ring-shaped homohexamer of HslV is capped on each side by a ring-shaped HslU homohexamer. The assembly of the HslU/HslV complex is dependent on binding of ATP.

The protein resides in the cytoplasm. It catalyses the reaction ATP-dependent cleavage of peptide bonds with broad specificity.. Its activity is regulated as follows. Allosterically activated by HslU binding. Protease subunit of a proteasome-like degradation complex believed to be a general protein degrading machinery. This chain is ATP-dependent protease subunit HslV, found in Ectopseudomonas mendocina (strain ymp) (Pseudomonas mendocina).